The chain runs to 153 residues: Putative tRNA (cytidine(34)-2'-O)-methyltransferase (153 aa).

S-adenosyl-L-methionine-binding residues include glycine 102, isoleucine 122, and serine 131.

The protein belongs to the class IV-like SAM-binding methyltransferase superfamily. RNA methyltransferase TrmH family. TrmL subfamily.

Its subcellular location is the cytoplasm. It carries out the reaction cytidine(34) in tRNA + S-adenosyl-L-methionine = 2'-O-methylcytidine(34) in tRNA + S-adenosyl-L-homocysteine + H(+). The enzyme catalyses 5-carboxymethylaminomethyluridine(34) in tRNA(Leu) + S-adenosyl-L-methionine = 5-carboxymethylaminomethyl-2'-O-methyluridine(34) in tRNA(Leu) + S-adenosyl-L-homocysteine + H(+). Could methylate the ribose at the nucleotide 34 wobble position in tRNA. The protein is Putative tRNA (cytidine(34)-2'-O)-methyltransferase of Synechocystis sp. (strain ATCC 27184 / PCC 6803 / Kazusa).